A 176-amino-acid polypeptide reads, in one-letter code: tRNA (cytidine(56)-2'-O)-methyltransferase (176 aa).

S-adenosyl-L-methionine is bound by residues L86 and 111 to 115 (GAEKV).

It belongs to the aTrm56 family. As to quaternary structure, homodimer.

It is found in the cytoplasm. The catalysed reaction is cytidine(56) in tRNA + S-adenosyl-L-methionine = 2'-O-methylcytidine(56) in tRNA + S-adenosyl-L-homocysteine + H(+). In terms of biological role, specifically catalyzes the AdoMet-dependent 2'-O-ribose methylation of cytidine at position 56 in tRNAs. The sequence is that of tRNA (cytidine(56)-2'-O)-methyltransferase from Methanoregula boonei (strain DSM 21154 / JCM 14090 / 6A8).